We begin with the raw amino-acid sequence, 108 residues long: UPF0235 protein Rpal_0418 (108 aa).

It belongs to the UPF0235 family.

The sequence is that of UPF0235 protein Rpal_0418 from Rhodopseudomonas palustris (strain TIE-1).